The chain runs to 344 residues: Phenylalanine--tRNA ligase alpha subunit (344 aa).

Residue glutamate 269 participates in Mg(2+) binding.

Belongs to the class-II aminoacyl-tRNA synthetase family. Phe-tRNA synthetase alpha subunit type 1 subfamily. As to quaternary structure, tetramer of two alpha and two beta subunits. The cofactor is Mg(2+).

The protein resides in the cytoplasm. It carries out the reaction tRNA(Phe) + L-phenylalanine + ATP = L-phenylalanyl-tRNA(Phe) + AMP + diphosphate + H(+). This Ralstonia pickettii (strain 12J) protein is Phenylalanine--tRNA ligase alpha subunit.